A 61-amino-acid chain; its full sequence is Lens epithelial cell protein LEP503 (61 aa).

As to expression, preferentially expressed in the lens epithelial cells.

This Rattus norvegicus (Rat) protein is Lens epithelial cell protein LEP503 (Lenep).